Reading from the N-terminus, the 121-residue chain is Small ribosomal subunit protein bS6 (121 aa).

Residues 96-121 (DTGPSSMMKTVEREDARKTQQAEYQA) are disordered. The segment covering 105–115 (TVEREDARKTQ) has biased composition (basic and acidic residues).

Belongs to the bacterial ribosomal protein bS6 family.

Binds together with bS18 to 16S ribosomal RNA. The chain is Small ribosomal subunit protein bS6 from Albidiferax ferrireducens (strain ATCC BAA-621 / DSM 15236 / T118) (Rhodoferax ferrireducens).